Consider the following 169-residue polypeptide: MDLSRIPAQPKAGLINVLIEIPAGSKNKYEFDKDMNCFALDRVLYSSVQYPYDYGFIPNTLADDGDPLDGMVIMDQPTFPGCVITARPIGMLEMIDGGDRDEKILCVPAKDPRYTYVKSINDLAGHRLDEIAEFFRSYKNLEKKVTEILGWKDVDAVLPLVEECVKNYK.

Met-1 bears the N-formylmethionine mark. 3 residues coordinate substrate: Lys-28, Arg-42, and Tyr-54. Mg(2+)-binding residues include Asp-64, Asp-69, and Asp-101. Residue Tyr-138 coordinates substrate.

It belongs to the PPase family. In terms of assembly, homohexamer. Mg(2+) is required as a cofactor.

The protein resides in the cytoplasm. It carries out the reaction diphosphate + H2O = 2 phosphate + H(+). With respect to regulation, inhibited by ATP, but not by fructose 1,6-bisphosphate or 2-phosphoglycerate. Functionally, hydrolyzes PPi generated in anabolic reactions. Catalyzes the hydrolysis of inorganic pyrophosphate (PPi) forming two phosphate ions. In Synechocystis sp. (strain ATCC 27184 / PCC 6803 / Kazusa), this protein is Inorganic pyrophosphatase.